Reading from the N-terminus, the 463-residue chain is Elongation factor 1-alpha (463 aa).

Residues 8 to 245 (KTHLNIVIIG…DALVPPVRPA (238 aa)) enclose the tr-type G domain. The G1 stretch occupies residues 17 to 24 (GHVDSGKS). 17–24 (GHVDSGKS) lines the GTP pocket. A G2 region spans residues 73-77 (GITID). The tract at residues 94–97 (DAPG) is G3. GTP contacts are provided by residues 94–98 (DAPGH) and 156–159 (NKMD). A G4 region spans residues 156–159 (NKMD). The tract at residues 197–199 (SGW) is G5.

It belongs to the TRAFAC class translation factor GTPase superfamily. Classic translation factor GTPase family. EF-Tu/EF-1A subfamily. As to quaternary structure, the 42S RNP particle comprises four subunits each of which contains one molecule of 5S RNA, three molecules of tRNA, two molecules of EF1-alpha and one molecule of the 5S RNA binding protein 43.

The protein resides in the cytoplasm. Functionally, this protein is one of two protein components of a 42S RNP particle that is very abundant in previtellogenic oocytes. A major function served by 42sp50 appears to be the storage of tRNAs for later use in oogenesis and early embryogenesis. Purified 42S particles can directly transfer aminoacyl tRNA to ribosomes. This chain is Elongation factor 1-alpha, found in Xenopus laevis (African clawed frog).